The sequence spans 117 residues: UPF0122 protein Dred_2057 (117 aa).

This sequence belongs to the UPF0122 family.

Its function is as follows. Might take part in the signal recognition particle (SRP) pathway. This is inferred from the conservation of its genetic proximity to ftsY/ffh. May be a regulatory protein. This chain is UPF0122 protein Dred_2057, found in Desulforamulus reducens (strain ATCC BAA-1160 / DSM 100696 / MI-1) (Desulfotomaculum reducens).